Here is a 660-residue protein sequence, read N- to C-terminus: Polyadenylate-binding protein 3 (660 aa).

RRM domains lie at 49-126 (SSLY…LSNR), 136-213 (GNIF…HFIR), 229-306 (TNVY…RAQK), and 332-409 (ANLY…LAQR). One can recognise a PABC domain in the interval 571 to 648 (PISKLTSSLA…ALDVLRLSVD (78 aa)).

The protein belongs to the polyadenylate-binding protein type-1 family. Expressed predominantly in immature flowers. Detected in tapetum and pollen. Strongly expressed in immatures siliques.

It localises to the cytoplasm. It is found in the nucleus. Its function is as follows. Binds the poly(A) tail of mRNA. Appears to be an important mediator of the multiple roles of the poly(A) tail in mRNA biogenesis, stability and translation. In the cytoplasm, affects both translation and mRNA decay. Inhibits the polyadenylated RNA degradation by the Rrp41p 3'--&gt;5' exonuclease in vitro. Binds with the 5'UTRs of PAB2, PAB3 and with a lower affinity with the 5'UTR of PAB5. This is Polyadenylate-binding protein 3 (PAB3) from Arabidopsis thaliana (Mouse-ear cress).